We begin with the raw amino-acid sequence, 113 residues long: uncharacterized protein (113 aa).

The 55-residue stretch at 16-70 (LYEYLEPLDLKINELAELLHVHRNSVSALINNNRKLTTEMAFRLAKVFDTTVDFW) folds into the HTH cro/C1-type domain. Residues 27–46 (INELAELLHVHRNSVSALIN) constitute a DNA-binding region (H-T-H motif).

Belongs to the VapA/VapI family.

This is an uncharacterized protein from Escherichia coli O6:H1 (strain CFT073 / ATCC 700928 / UPEC).